We begin with the raw amino-acid sequence, 296 residues long: Lipoyl synthase (296 aa).

[4Fe-4S] cluster-binding residues include Cys-38, Cys-43, Cys-49, Cys-64, Cys-68, Cys-71, and Ser-279. The region spanning 50 to 268 (WDGGCLTFMV…AEYGRSLGFK (219 aa)) is the Radical SAM core domain.

The protein belongs to the radical SAM superfamily. Lipoyl synthase family. It depends on [4Fe-4S] cluster as a cofactor.

It localises to the cytoplasm. The enzyme catalyses [[Fe-S] cluster scaffold protein carrying a second [4Fe-4S](2+) cluster] + N(6)-octanoyl-L-lysyl-[protein] + 2 oxidized [2Fe-2S]-[ferredoxin] + 2 S-adenosyl-L-methionine + 4 H(+) = [[Fe-S] cluster scaffold protein] + N(6)-[(R)-dihydrolipoyl]-L-lysyl-[protein] + 4 Fe(3+) + 2 hydrogen sulfide + 2 5'-deoxyadenosine + 2 L-methionine + 2 reduced [2Fe-2S]-[ferredoxin]. It functions in the pathway protein modification; protein lipoylation via endogenous pathway; protein N(6)-(lipoyl)lysine from octanoyl-[acyl-carrier-protein]: step 2/2. Its function is as follows. Catalyzes the radical-mediated insertion of two sulfur atoms into the C-6 and C-8 positions of the octanoyl moiety bound to the lipoyl domains of lipoate-dependent enzymes, thereby converting the octanoylated domains into lipoylated derivatives. The polypeptide is Lipoyl synthase (Methanocella arvoryzae (strain DSM 22066 / NBRC 105507 / MRE50)).